Here is a 556-residue protein sequence, read N- to C-terminus: Zinc finger protein GLI1 (556 aa).

Disordered stretches follow at residues 57-83 (TEHP…KKRA), 133-178 (SLGY…TPAR), and 200-222 (KYPE…QDPL). Over residues 135–148 (GYQNPPGQQKGQGQ) the composition is skewed to low complexity. 5 consecutive C2H2-type zinc fingers follow at residues 247 to 272 (TNCY…NNEH), 280 to 307 (FVCH…MRRH), 313 to 337 (HKCT…LRSH), 343 to 368 (YVCE…NRTH), and 374 to 399 (YICK…KTVH). The tract at residues 295–303 (KAQYMLVVH) is interaction with DNA. Interaction with DNA stretches follow at residues 357–362 (ASDRAK) and 387–393 (DPSSLRK). The tract at residues 387–492 (DPSSLRKHVK…VEMTGNTGGS (106 aa)) is disordered. The segment covering 454 to 472 (SKPQPSPGGQSSCSSDRSP) has biased composition (low complexity).

Belongs to the GLI C2H2-type zinc-finger protein family.

The protein resides in the cytoplasm. Its subcellular location is the nucleus. Its function is as follows. Acts as a transcriptional activator. Binds to the DNA consensus sequence 5'-GACCACCCA-3'. May regulate the transcription of specific genes during normal development. May play a role in craniofacial development and digital development, as well as development of the central nervous system and gastrointestinal tract. Mediates SHH signaling. Plays a role in cell proliferation and differentiation via its role in SHH signaling. This is Zinc finger protein GLI1 (GLI1) from Gallus gallus (Chicken).